The primary structure comprises 435 residues: Shikimate O-hydroxycinnamoyltransferase (435 aa).

Residues His153 and Asp382 each act as proton acceptor in the active site.

It belongs to the plant acyltransferase family. Highly expressed in stem vascular tissues.

It catalyses the reaction shikimate + 4-coumaroyl-CoA = trans-4-coumaroylshikimate + CoA. In terms of biological role, acyltransferase involved in the biosynthesis of lignin. The affinity for shikimate as acceptor is 100-fold higher than for quinate. The most efficient donors are caffeoyl-CoA &gt; p-coumaroyl-CoA &gt; feruloyl-CoA &gt;&gt; sinapoyl-CoA. The chain is Shikimate O-hydroxycinnamoyltransferase (HST) from Nicotiana tabacum (Common tobacco).